Consider the following 1075-residue polypeptide: Flocculation protein FLO5 (1075 aa).

The signal sequence occupies residues 1–24 (MTIAHHCIFLVILAFLALINVASG). One can recognise a PA14 domain in the interval 74-249 (GGQTDISIDY…GTTVSDNFEG (176 aa)). N-linked (GlcNAc...) asparagine glycosylation is found at N135, N187, N203, and N262. Residues 197–240 (DGSLPDNITGTVYMYAGYYYPLKVVYSNAVSWGTLPISVELPDG) form a sugar recognition region. Tandem repeats lie at residues 278–322 (TTTE…STIT), 323–367 (TTTE…GLIT), 368–412 (TTTE…GLIT), 413–457 (TTTE…GLIT), 458–502 (TTTE…GLIS), 503–547 (TTTE…GLIT), 548–592 (TTTE…GLIT), and 593–637 (RTTE…ISSS). Positions 278-637 (TTTEPWTGTF…RTPTTAISSS (360 aa)) are 8 X 45 AA approximate tandem repeats, Thr-rich. Low complexity-rich tracts occupy residues 322-345 (TTTT…VTGT), 367-390 (TTTT…VTGT), 457-480 (TTTT…VTGT), and 547-570 (TTTT…VTGT). Disordered stretches follow at residues 322–349 (TTTT…NGQP), 366–394 (ITTT…NGQP), 456–484 (ITTT…NGQP), and 546–574 (ITTT…NGQP). A glycan (N-linked (GlcNAc...) asparagine) is linked at N663. Tandem repeats lie at residues 667–686 (VISS…TSSS) and 687–706 (FISS…IFSE). The 2 X 20 AA approximate tandem repeats, Ser-rich stretch occupies residues 667-706 (VISSSVISSSVTSSLVTSSSFISSSVISSSTTTSTSIFSE). The span at 702 to 762 (SIFSESSTSS…SLPPVTSATT (61 aa)) shows a compositional bias: low complexity. The disordered stretch occupies residues 702-781 (SIFSESSTSS…PATTTKTSEQ (80 aa)). N-linked (GlcNAc...) asparagine glycosylation occurs at N749. Over residues 763 to 781 (GQETASSLPPATTTKTSEQ) the composition is skewed to polar residues. Repeat copies occupy residues 775–825 (TTKT…CPIS), 847–897 (TTET…CPIS), and 898–948 (TTES…RPQT). The 3 X 51 AA approximate repeats, Ser/Thr-rich stretch occupies residues 775–948 (TTKTSEQTTL…TVYPTWRPQT (174 aa)). Over residues 948-958 (TTNEQSVSSKM) the composition is skewed to polar residues. 2 disordered regions span residues 948–980 (TTNE…AVTS) and 1016–1038 (SLTS…SSMV). Low complexity-rich tracts occupy residues 959–977 (NSAT…TKTA) and 1016–1026 (SLTSSGLSTMS). Polar residues predominate over residues 1027–1038 (QQPRSTPASSMV). G1052 carries the GPI-anchor amidated glycine lipid modification. The propeptide at 1053–1075 (SANSLLAGSGLSVFIASLLLAII) is removed in mature form.

It belongs to the flocculin family. In terms of processing, extensively O-glycosylated. The GPI-anchor is attached to the protein in the endoplasmic reticulum and serves to target the protein to the cell surface. There, the glucosamine-inositol phospholipid moiety is cleaved off and the GPI-modified mannoprotein is covalently attached via its lipidless GPI glycan remnant to the 1,6-beta-glucan of the outer cell wall layer.

Its subcellular location is the secreted. It is found in the cell wall. The protein localises to the membrane. Its function is as follows. Cell wall protein that participates directly in adhesive cell-cell interactions during yeast flocculation, a reversible, asexual and Ca(2+)-dependent process in which cells adhere to form aggregates (flocs) consisting of thousands of cells. The lectin-like protein sticks out of the cell wall of flocculent cells and selectively binds mannose residues in the cell walls of adjacent cells. Activity is inhibited by mannose, but not by glucose, maltose, sucrose or galactose. The sequence is that of Flocculation protein FLO5 (FLO5) from Saccharomyces cerevisiae (strain ATCC 204508 / S288c) (Baker's yeast).